We begin with the raw amino-acid sequence, 641 residues long: 1-deoxy-D-xylulose-5-phosphate synthase (641 aa).

Residues histidine 71 and 112–114 (SHA) each bind thiamine diphosphate. Aspartate 144 contributes to the Mg(2+) binding site. Residues 145 to 146 (GA), asparagine 174, tyrosine 285, and glutamate 366 each bind thiamine diphosphate. Asparagine 174 lines the Mg(2+) pocket.

The protein belongs to the transketolase family. DXPS subfamily. As to quaternary structure, homodimer. The cofactor is Mg(2+). Thiamine diphosphate is required as a cofactor.

The enzyme catalyses D-glyceraldehyde 3-phosphate + pyruvate + H(+) = 1-deoxy-D-xylulose 5-phosphate + CO2. It functions in the pathway metabolic intermediate biosynthesis; 1-deoxy-D-xylulose 5-phosphate biosynthesis; 1-deoxy-D-xylulose 5-phosphate from D-glyceraldehyde 3-phosphate and pyruvate: step 1/1. Functionally, catalyzes the acyloin condensation reaction between C atoms 2 and 3 of pyruvate and glyceraldehyde 3-phosphate to yield 1-deoxy-D-xylulose-5-phosphate (DXP). This chain is 1-deoxy-D-xylulose-5-phosphate synthase, found in Mycobacteroides abscessus (strain ATCC 19977 / DSM 44196 / CCUG 20993 / CIP 104536 / JCM 13569 / NCTC 13031 / TMC 1543 / L948) (Mycobacterium abscessus).